Here is a 324-residue protein sequence, read N- to C-terminus: tRNA dimethylallyltransferase (324 aa).

Position 20–27 (20–27 (GPTASGKS)) interacts with ATP. Residue 22-27 (TASGKS) coordinates substrate. 3 interaction with substrate tRNA regions span residues 45 to 48 (DSAL), 168 to 172 (QRLIR), and 284 to 291 (KRQITWLR).

The protein belongs to the IPP transferase family. In terms of assembly, monomer. Mg(2+) is required as a cofactor.

It catalyses the reaction adenosine(37) in tRNA + dimethylallyl diphosphate = N(6)-dimethylallyladenosine(37) in tRNA + diphosphate. Functionally, catalyzes the transfer of a dimethylallyl group onto the adenine at position 37 in tRNAs that read codons beginning with uridine, leading to the formation of N6-(dimethylallyl)adenosine (i(6)A). This is tRNA dimethylallyltransferase from Hydrogenovibrio crunogenus (strain DSM 25203 / XCL-2) (Thiomicrospira crunogena).